The chain runs to 377 residues: Gastricsin (377 aa).

The N-terminal stretch at Gln-1 to Ala-5 is a signal peptide. 2 consecutive propeptides (activation peptide) follow at residues Ala-6 to Phe-31 and Leu-32 to Leu-48. Residues Tyr-62–Ala-374 form the Peptidase A1 domain. Asp-80 is an active-site residue. 2 disulfide bridges follow: Cys-93–Cys-98 and Cys-256–Cys-260. Asp-265 is an active-site residue. Cysteines 299 and 332 form a disulfide.

This sequence belongs to the peptidase A1 family. In terms of processing, each pepsinogen is converted to corresponding pepsin at pH 2.0 in part as a result of the release of a 47 AA activation segment and in part as a result of stepwise proteolytic cleavage via an intermediate form(s).

The protein resides in the secreted. It catalyses the reaction More restricted specificity than pepsin A, but shows preferential cleavage at Tyr-|-Xaa bonds. High activity on hemoglobin.. Its function is as follows. Hydrolyzes a variety of proteins. The sequence is that of Gastricsin (PGC) from Macaca fuscata fuscata (Japanese macaque).